Consider the following 431-residue polypeptide: Glutamate-1-semialdehyde 2,1-aminomutase (431 aa).

Lys264 is modified (N6-(pyridoxal phosphate)lysine).

It belongs to the class-III pyridoxal-phosphate-dependent aminotransferase family. HemL subfamily. As to quaternary structure, homodimer. The cofactor is pyridoxal 5'-phosphate.

It localises to the cytoplasm. The enzyme catalyses (S)-4-amino-5-oxopentanoate = 5-aminolevulinate. It functions in the pathway porphyrin-containing compound metabolism; protoporphyrin-IX biosynthesis; 5-aminolevulinate from L-glutamyl-tRNA(Glu): step 2/2. This Clostridium beijerinckii (strain ATCC 51743 / NCIMB 8052) (Clostridium acetobutylicum) protein is Glutamate-1-semialdehyde 2,1-aminomutase.